Here is a 1174-residue protein sequence, read N- to C-terminus: RecBCD enzyme subunit RecB (1174 aa).

The tract at residues 1 to 852 (MKIDSLKEKL…GGKTMNYEGL (852 aa)) is DNA-binding and helicase activity, interacts with RecC. The 446-residue stretch at 4 to 449 (DSLKEKLNIF…YYLDTNWRSS (446 aa)) folds into the UvrD-like helicase ATP-binding domain. 25 to 32 (ASAGTGKT) is an ATP binding site. One can recognise a UvrD-like helicase C-terminal domain in the interval 479-745 (PSSKNLKMNF…KIITIHKSKG (267 aa)). The segment at 900–1174 (TWSITSFSQL…LIKKTMTLIS (275 aa)) is nuclease activity, interacts with RecD and RecA. His957, Asp1068, and Asp1081 together coordinate Mg(2+). Asp1081 (for nuclease activity) is an active-site residue.

Belongs to the helicase family. UvrD subfamily. As to quaternary structure, heterotrimer of RecB, RecC and RecD. All subunits contribute to DNA-binding. Interacts with RecA. Mg(2+) serves as cofactor.

It carries out the reaction Exonucleolytic cleavage (in the presence of ATP) in either 5'- to 3'- or 3'- to 5'-direction to yield 5'-phosphooligonucleotides.. The catalysed reaction is Couples ATP hydrolysis with the unwinding of duplex DNA by translocating in the 3'-5' direction.. It catalyses the reaction ATP + H2O = ADP + phosphate + H(+). Its function is as follows. A helicase/nuclease that prepares dsDNA breaks (DSB) for recombinational DNA repair. Binds to DSBs and unwinds DNA via a highly rapid and processive ATP-dependent bidirectional helicase activity. Unwinds dsDNA until it encounters a Chi (crossover hotspot instigator) sequence from the 3' direction. Cuts ssDNA a few nucleotides 3' to the Chi site. The properties and activities of the enzyme are changed at Chi. The Chi-altered holoenzyme produces a long 3'-ssDNA overhang and facilitates RecA-binding to the ssDNA for homologous DNA recombination and repair. Holoenzyme degrades any linearized DNA that is unable to undergo homologous recombination. In the holoenzyme this subunit contributes ATPase, 3'-5' helicase, exonuclease activity and loads RecA onto ssDNA. The sequence is that of RecBCD enzyme subunit RecB from Buchnera aphidicola subsp. Acyrthosiphon pisum (strain APS) (Acyrthosiphon pisum symbiotic bacterium).